The sequence spans 161 residues: Nucleotide-binding protein BceJ2315_27070 (161 aa).

This sequence belongs to the YajQ family.

Its function is as follows. Nucleotide-binding protein. This Burkholderia cenocepacia (strain ATCC BAA-245 / DSM 16553 / LMG 16656 / NCTC 13227 / J2315 / CF5610) (Burkholderia cepacia (strain J2315)) protein is Nucleotide-binding protein BceJ2315_27070.